The following is a 156-amino-acid chain: Small ribosomal subunit protein uS7 (156 aa).

Belongs to the universal ribosomal protein uS7 family. As to quaternary structure, part of the 30S ribosomal subunit. Contacts proteins S9 and S11.

One of the primary rRNA binding proteins, it binds directly to 16S rRNA where it nucleates assembly of the head domain of the 30S subunit. Is located at the subunit interface close to the decoding center, probably blocks exit of the E-site tRNA. This is Small ribosomal subunit protein uS7 from Mycolicibacterium smegmatis (strain ATCC 700084 / mc(2)155) (Mycobacterium smegmatis).